We begin with the raw amino-acid sequence, 386 residues long: 5-hydroxytryptamine receptor 1B (386 aa).

The tract at residues 1–25 is disordered; the sequence is MEEPGARCAPPPPAGSQTQTPSSNL. The Extracellular portion of the chain corresponds to 1–42; the sequence is MEEPGARCAPPPPAGSQTQTPSSNLSHNCSADSYIYQDSIAL. The segment covering 16 to 25 has biased composition (polar residues); the sequence is SQTQTPSSNL. N-linked (GlcNAc...) asparagine glycosylation is found at N24 and N28. Residues 43–68 traverse the membrane as a helical segment; it reads PWKVLLVALLALITLATTLSNAFVIA. The Cytoplasmic portion of the chain corresponds to 69–82; it reads TVYRTRKLHTPANY. The helical transmembrane segment at 83-107 threads the bilayer; the sequence is LIASLAVTDLLVSILVMPISTMYTV. The Extracellular portion of the chain corresponds to 108-115; that stretch reads TGRWTLGQ. The helical transmembrane segment at 116 to 141 threads the bilayer; it reads VVCDFWLSSDITCCTASIMHLCVIAL. A disulfide bond links C118 and C195. Residues D125 and T130 each contribute to the ergotamine site. The DRY motif; important for ligand-induced conformation changes and signaling signature appears at 142 to 144; the sequence is DRY. At 142 to 161 the chain is on the cytoplasmic side; that stretch reads DRYWAITDAVEYSAKRTPRR. The chain crosses the membrane as a helical span at residues 162-180; the sequence is AAVMIALVWVFSISISLPR. At 181 to 201 the chain is on the extracellular side; the sequence is FFWRQAKAEEEVLDCLVNTDH. Position 197 (V197) interacts with ergotamine. Residues 202-225 form a helical membrane-spanning segment; it reads VLYTVYSTVGAFYLPTLLLIALYG. Residues 226-311 are Cytoplasmic-facing; the sequence is RIYVEARSRI…AARERKATKT (86 aa). Residues 253-272 are disordered; that stretch reads ISDSPGSTSSVTSINSRVPD. The segment covering 254 to 268 has biased composition (low complexity); that stretch reads SDSPGSTSSVTSINS. A helical membrane pass occupies residues 312–333; that stretch reads LGIILGAFIVCWLPFFIISLVM. At 334-343 the chain is on the extracellular side; the sequence is PICKDACWFH. The helical transmembrane segment at 344–366 threads the bilayer; it reads MAIFDFFNWLGYLNSLINPIIYT. The short motif at 361-365 is the NPxxY motif; important for ligand-induced conformation changes and signaling element; that stretch reads NPIIY. The Cytoplasmic portion of the chain corresponds to 367–386; that stretch reads MPNEDFKQAFHKLIRFKCTG. The S-palmitoyl cysteine moiety is linked to residue C384.

Belongs to the G-protein coupled receptor 1 family. As to quaternary structure, homodimer. Heterodimer with HTR1D. Post-translationally, phosphorylated. Desensitization of the receptor may be mediated by its phosphorylation. Palmitoylated.

The protein localises to the cell membrane. Functionally, G-protein coupled receptor for 5-hydroxytryptamine (serotonin). Also functions as a receptor for ergot alkaloid derivatives, various anxiolytic and antidepressant drugs and other psychoactive substances, such as lysergic acid diethylamide (LSD). Ligand binding causes a conformation change that triggers signaling via guanine nucleotide-binding proteins (G proteins) and modulates the activity of downstream effectors, such as adenylate cyclase. HTR1B is coupled to G(i)/G(o) G alpha proteins and mediates inhibitory neurotransmission by inhibiting adenylate cyclase activity. Arrestin family members inhibit signaling via G proteins and mediate activation of alternative signaling pathways. Regulates the release of 5-hydroxytryptamine, dopamine and acetylcholine in the brain, and thereby affects neural activity, nociceptive processing, pain perception, mood and behavior. Besides, plays a role in vasoconstriction of cerebral arteries. In Spalax ehrenbergi (Middle East blind mole rat), this protein is 5-hydroxytryptamine receptor 1B (HTR1B).